Consider the following 99-residue polypeptide: UPF0213 protein spr1390 (99 aa).

In terms of domain architecture, GIY-YIG spans 3–78; that stretch reads HKAYMYVLEC…KRKKRPQKEE (76 aa).

The protein belongs to the UPF0213 family.

This Streptococcus pneumoniae (strain ATCC BAA-255 / R6) protein is UPF0213 protein spr1390.